Consider the following 102-residue polypeptide: Small ribosomal subunit protein uS10 (102 aa).

This sequence belongs to the universal ribosomal protein uS10 family. As to quaternary structure, part of the 30S ribosomal subunit.

Involved in the binding of tRNA to the ribosomes. This is Small ribosomal subunit protein uS10 from Methanocorpusculum labreanum (strain ATCC 43576 / DSM 4855 / Z).